Consider the following 476-residue polypeptide: Alkaline phosphatase H (476 aa).

The first 26 residues, 1 to 26 (MTPGYPLALSLAVSMAVLGSALPAQA), serve as a signal peptide directing secretion. Asp77 is a Mg(2+) binding site. Asp77 is a Zn(2+) binding site. The active-site Phosphoserine intermediate is Ser128. The residue at position 128 (Ser128) is a Phosphoserine. Mg(2+) is bound by residues Asp179 and Thr181. Ser206 carries the phosphoserine modification. Gln346 provides a ligand contact to Mg(2+). Residues Asp353, His357, Asp395, His396, and His438 each contribute to the Zn(2+) site.

The protein belongs to the alkaline phosphatase family. It depends on Mg(2+) as a cofactor. Zn(2+) serves as cofactor.

It is found in the secreted. The protein resides in the periplasm. The enzyme catalyses a phosphate monoester + H2O = an alcohol + phosphate. Its function is as follows. Has only phosphomonoesterase activity. This is Alkaline phosphatase H (phoA) from Pseudomonas aeruginosa (strain UCBPP-PA14).